A 93-amino-acid polypeptide reads, in one-letter code: Large ribosomal subunit protein uL23cz/uL23cy (93 aa).

The protein belongs to the universal ribosomal protein uL23 family. In terms of assembly, part of the 50S ribosomal subunit.

The protein localises to the plastid. It localises to the chloroplast. In terms of biological role, binds to 23S rRNA. This chain is Large ribosomal subunit protein uL23cz/uL23cy (rpl23-A), found in Panax ginseng (Korean ginseng).